Here is a 48-residue protein sequence, read N- to C-terminus: 4-carboxymuconolactone decarboxylase (48 aa).

This sequence belongs to the carboxymuconolactone decarboxylase family.

The catalysed reaction is (R)-2-(carboxymethyl)-5-oxo-2,5-dihydro-2-furoate + H(+) = (4,5-dihydro-5-oxofuran-2-yl)-acetate + CO2. Its pathway is aromatic compound metabolism; beta-ketoadipate pathway; 5-oxo-4,5-dihydro-2-furylacetate from 3-carboxy-cis,cis-muconate: step 2/2. The chain is 4-carboxymuconolactone decarboxylase from Pseudomonas putida (Arthrobacter siderocapsulatus).